Here is a 305-residue protein sequence, read N- to C-terminus: 4-diphosphocytidyl-2-C-methyl-D-erythritol kinase (305 aa).

The active site involves Lys17. 111 to 121 (PVASGIGGGSA) serves as a coordination point for ATP. Asp154 is an active-site residue.

This sequence belongs to the GHMP kinase family. IspE subfamily.

It carries out the reaction 4-CDP-2-C-methyl-D-erythritol + ATP = 4-CDP-2-C-methyl-D-erythritol 2-phosphate + ADP + H(+). The protein operates within isoprenoid biosynthesis; isopentenyl diphosphate biosynthesis via DXP pathway; isopentenyl diphosphate from 1-deoxy-D-xylulose 5-phosphate: step 3/6. Its function is as follows. Catalyzes the phosphorylation of the position 2 hydroxy group of 4-diphosphocytidyl-2C-methyl-D-erythritol. The protein is 4-diphosphocytidyl-2-C-methyl-D-erythritol kinase of Gluconacetobacter diazotrophicus (strain ATCC 49037 / DSM 5601 / CCUG 37298 / CIP 103539 / LMG 7603 / PAl5).